A 363-amino-acid polypeptide reads, in one-letter code: Trichocyst matrix protein T4-A (363 aa).

Positions 1–17 (MARSLTILAIVFAVATA) are cleaved as a signal peptide. The propeptide occupies 18–52 (RVTKSESPKEILAQVNKDSFGNSILSVLQLQLATG). A coiled-coil region spans residues 85 to 119 (VAFEKIIADLEQEIAYHQTQIVALSNLRDSTTEAL). Residues 190–221 (RFEKVQAKLMESKHALFKPLINALTQLASKVD) constitute a propeptide that is removed on maturation. Positions 244-352 (ASLLATEERQ…EVLTQKLSAA (109 aa)) form a coiled coil.

Belongs to the TMP family. In terms of processing, two components are produced by post-translational processing from the precursor peptide.

Its subcellular location is the trichocyst. In terms of biological role, structural protein that crystallize inside the trichocyst matrix. This is Trichocyst matrix protein T4-A (T4A) from Paramecium tetraurelia.